Here is a 213-residue protein sequence, read N- to C-terminus: 24 kDa ookinete surface protein (213 aa).

The N-terminal stretch at 1 to 28 is a signal peptide; that stretch reads MNFKYSFIFLFFIQLAIRYNNAKITVDT. The 30-residue stretch at 30-59 folds into the EGF-like 1; truncated domain; that stretch reads CKGGKLIQMSNHYECKCPSGYALKTENTCE. EGF-like domains follow at residues 60–108 and 108–148; these read PIVK…NICK and KPTR…GKCT. Cystine bridges form between Cys64-Cys80, Cys74-Cys94, Cys96-Cys107, Cys112-Cys122, Cys117-Cys134, and Cys136-Cys147. The region spanning 151-175 is the EGF-like 4; truncated domain; it reads GETKCLLKCKAAEECKLTGKHYECV. A lipid anchor (GPI-anchor amidated asparagine) is attached at Asn190. Asn190 carries an N-linked (GlcNAc...) asparagine glycan. A propeptide spans 191–213 (removed in mature form); the sequence is SSFMNGMSIISIIALLVIYVIVM.

The protein localises to the cell membrane. This is 24 kDa ookinete surface protein from Plasmodium berghei (strain Anka).